Reading from the N-terminus, the 931-residue chain is Protein translocase subunit SecA (931 aa).

ATP-binding positions include Q87, 105–109, and D515; that span reads GEGKT. Zn(2+) is bound by residues C915, C917, C926, and H927.

It belongs to the SecA family. As to quaternary structure, monomer and homodimer. Part of the essential Sec protein translocation apparatus which comprises SecA, SecYEG and auxiliary proteins SecDF-YajC and YidC. The cofactor is Zn(2+).

The protein localises to the cell inner membrane. It is found in the cytoplasm. It carries out the reaction ATP + H2O + cellular proteinSide 1 = ADP + phosphate + cellular proteinSide 2.. In terms of biological role, part of the Sec protein translocase complex. Interacts with the SecYEG preprotein conducting channel. Has a central role in coupling the hydrolysis of ATP to the transfer of proteins into and across the cell membrane, serving both as a receptor for the preprotein-SecB complex and as an ATP-driven molecular motor driving the stepwise translocation of polypeptide chains across the membrane. The sequence is that of Protein translocase subunit SecA from Burkholderia ambifaria (strain MC40-6).